Consider the following 674-residue polypeptide: MARAHWGCCPWLVLLCACAWGHTKPVDLGGQDVRNCSTNPPYLPVTVVNTTMSLTALRQQMQTQNLSAYIIPGTDAHMNEYIGQHDERRAWITGFTGSAGTAVVTMKKAAVWTDSRYWTQAERQMDCNWELHKEVGTTPIVTWLLTEIPAGGRVGFDPFLLSIDTWESYDLALQGSNRQLVSITTNLVDLVWGSERPPVPNQPIYALQEAFTGSTWQEKVSGVRSQMQKHQKVPTAVLLSALEETAWLFNLRASDIPYNPFFYSYTLLTDSSIRLFANKSRFSSETLSYLNSSCTGPMCVQIEDYSQVRDSIQAYSLGDVRIWIGTSYTMYGIYEMIPKEKLVTDTYSPVMMTKAVKNSKEQALLKASHVRDAVAVIRYLVWLEKNVPKGTVDEFSGAEIVDKFRGEEQFSSGPSFETISASGLNAALAHYSPTKELNRKLSSDEMYLLDSGGQYWDGTTDITRTVHWGTPSAFQKEAYTRVLIGNIDLSRLIFPAATSGRMVEAFARRALWDAGLNYGHGTGHGIGNFLCVHEWPVGFQSNNIAMAKGMFTSIEPGYYKDGEFGIRLEDVALVVEAKTKYPGSYLTFEVVSFVPYDRNLIDVSLLSPEHLQYLNRYYQTIREKVGPELQRRQLLEEFEWLQQHTEPLAARAPDTASWASVLVVSTLAILGWSV.

The N-terminal stretch at 1-21 is a signal peptide; the sequence is MARAHWGCCPWLVLLCACAWG. Residues asparagine 35, asparagine 49, and asparagine 65 are each glycosylated (N-linked (GlcNAc...) asparagine). Position 116 (arginine 116) interacts with substrate. N-linked (GlcNAc...) asparagine glycans are attached at residues asparagine 278 and asparagine 291. Histidine 430 lines the substrate pocket. Zn(2+) is bound by residues aspartate 450, aspartate 461, and histidine 524. Residues histidine 524, histidine 533, and glutamate 555 each contribute to the substrate site. The Zn(2+) site is built by glutamate 555 and glutamate 569. Alanine 649 carries GPI-anchor amidated alanine lipidation. Positions 650 to 674 are cleaved as a propeptide — removed in mature form; that stretch reads ARAPDTASWASVLVVSTLAILGWSV.

It belongs to the peptidase M24B family. Homotrimer. Zn(2+) is required as a cofactor. Post-translationally, N-glycosylated. In terms of tissue distribution, expressed in kidney, lung, heart, placenta, liver, small intestine and colon. No expression in brain, skeletal muscle, pancreas, spleen, thymus, prostate, testis and ovary.

It is found in the cell membrane. It catalyses the reaction Release of any N-terminal amino acid, including proline, that is linked to proline, even from a dipeptide or tripeptide.. With respect to regulation, inhibited by apstatin and the chelating agent 1,10-phenanthroline. Also inhibited by high concentrations of Zn(2+). Not significantly inhibited by bestatin or phosphoramidon. Its function is as follows. Membrane-bound metalloprotease which catalyzes the removal of a penultimate prolyl residue from the N-termini of peptides, such as Arg-Pro-Pro. May play a role in the metabolism of the vasodilator bradykinin. The polypeptide is Xaa-Pro aminopeptidase 2 (XPNPEP2) (Homo sapiens (Human)).